The sequence spans 4749 residues: E3 ubiquitin-protein ligase MYCBP2 (4749 aa).

3 disordered regions span residues 87-127 (DRDQ…RSKS), 170-192 (AASK…SREP), and 609-628 (ASKG…KPYK). A compositionally biased stretch (basic residues) spans 100-124 (SRNKKILNKKKLKRKQKSKSKVKTR). Phosphoserine is present on residues Ser-127, Ser-178, Ser-181, and Ser-183. 5 RCC1 repeats span residues 600 to 655 (DGSV…VISK), 699 to 755 (NGEV…MMCP), 907 to 957 (KRDK…VLME), 958 to 1009 (NGDV…LLMD), and 1011 to 1066 (QVFT…LRID). The segment covering 899-910 (SHPAQLKHKRDK) has biased composition (basic residues). Positions 899-928 (SHPAQLKHKRDKHKDGSGDRGEKDASKITT) are disordered. The span at 911–924 (HKDGSGDRGEKDAS) shows a compositional bias: basic and acidic residues. The segment at 1235 to 1386 (NRFESHGGGW…GQIPQLLYRL (152 aa)) is PHR domain 1. The residue at position 1621 (Ser-1621) is a Phosphoserine. A PHR domain 2 region spans residues 1723-1881 (NRFTKTSQGR…GQIPQILYYR (159 aa)). The cysteines at positions 1745 and 1860 are disulfide-linked. The tract at residues 2018-2544 (AVIESEHPYK…FNQHLGKSLL (527 aa)) is RAE1 binding. Disordered stretches follow at residues 2313-2336 (KKTS…SAAA) and 2780-3084 (QQRQ…KGDG). Residues 2331–2438 (SPSAAASSAD…IDAGLEVKVK (108 aa)) form a Filamin repeat. Residues 2780–2803 (QQRQLQSDRGTISTSSRPVSTSGK) are compositionally biased toward polar residues. The span at 2814 to 2832 (VKPDGHVSRTPADQKKPRG) shows a compositional bias: basic and acidic residues. Ser-2841 bears the Phosphoserine mark. The segment covering 2847–2857 (DAAKLRSDSHS) has biased composition (basic and acidic residues). The segment covering 2858 to 2879 (RSLSPNHNTLQTLKSDGRTSSG) has biased composition (polar residues). Phosphoserine occurs at positions 2859 and 2861. 2 stretches are compositionally biased toward low complexity: residues 2884 to 2894 (SPGPGSRSSSP) and 2904 to 2917 (SSPS…SSSP). Phosphoserine occurs at positions 2905 and 2911. Over residues 2918–2929 (QDKNLPQKSTAP) the composition is skewed to polar residues. Residues 2932–2943 (TKLDPPRERSKS) are compositionally biased toward basic and acidic residues. Ser-2941, Ser-2943, and Ser-2992 each carry phosphoserine. Over residues 3008–3021 (CTSSTLKTNGVTDS) the composition is skewed to polar residues. Composition is skewed to basic and acidic residues over residues 3027-3037 (GDLKSVDEGSN) and 3047-3056 (PLKDEQEMRA). At Ser-3057 the chain carries Phosphoserine. Residues 3060–3073 (ISRKCANRHTRPKK) are compositionally biased toward basic residues. Phosphoserine occurs at positions 3162, 3550, and 3577. The tract at residues 3677–3700 (VEAEEDEDEDNKSNKENAEQEKDT) is disordered. Residues 3687–3700 (NKSNKENAEQEKDT) show a composition bias toward basic and acidic residues. Positions 3789-3967 (FSISVQSGFE…SVAQQRSCEA (179 aa)) constitute a DOC domain. Positions 3986-4007 (SGDAEPTPEQEEKALLSSPEGE) are disordered. Thr-3992 is modified (phosphothreonine). A phosphoserine mark is found at Ser-4002 and Ser-4003. Zn(2+) contacts are provided by Cys-4499, Cys-4502, Cys-4517, His-4519, His-4522, Cys-4525, Cys-4546, Cys-4549, Cys-4615, and Cys-4618. Residues 4499–4550 (CMICFTEALSAAPAIQLDCSHVFHLQCCRRVLENRWLGPRITFGFISCPICK) form an RING-type; atypical zinc finger. The interval 4610 to 4747 (YAYYVCYKCR…LGCGVCRNAH (138 aa)) is tandem cysteine domain. The active site involves Cys-4629. Residues Cys-4646, Cys-4649, Cys-4658, His-4661, Cys-4670, Cys-4673, and Cys-4674 each coordinate Zn(2+). Cys-4681 is a catalytic residue. Zn(2+)-binding residues include Cys-4688, Cys-4691, Cys-4709, Cys-4723, His-4729, Cys-4740, and Cys-4743.

Belongs to the RING-Cys relay (RCR) family. Interacts with MYC. Interacts with TSC2 (tuberin) when TSC2 is in complex with TSC1 (hamartin). Interacts with FBXO45. Interacts with RAE1. Interacts with CPNE1 (via VWFA domain) and CPNE4 (via VWFA domain). Interacts with (sumoylated) RANGAP1; interaction with sumoylated RANGAP1 inhibits E3 ubiquitin-protein ligase activity and promotes MYCBP2 translocation to the nucleus. Interacts with RAN. Interacts with ATP13A2; the interaction inhibits the ubiquitination of TSC2 by MYCBP2. Interacts with USP11. Post-translationally, autoubiquitinated. Expression is mostly restricted to the nervous system, including expression in motor and sensory axons. During postnatal development, expression is particularly strong in the cerebellum, hippocampus and retina. Lower levels of expression are observed throughout the cerebral cortex.

It is found in the nucleus. The protein localises to the cell projection. The protein resides in the axon. It localises to the cytoplasm. Its subcellular location is the cytoskeleton. It catalyses the reaction [E2 ubiquitin-conjugating enzyme]-S-ubiquitinyl-L-cysteine + [acceptor protein]-L-threonine = [E2 ubiquitin-conjugating enzyme]-L-cysteine + [acceptor protein]-3-O-ubiquitinyl-L-threonine.. Its pathway is protein modification; protein ubiquitination. Functionally, atypical E3 ubiquitin-protein ligase which specifically mediates ubiquitination of threonine and serine residues on target proteins, instead of ubiquitinating lysine residues. Shows esterification activity towards both threonine and serine, with a preference for threonine, and acts via two essential catalytic cysteine residues that relay ubiquitin to its substrate via thioester intermediates. Interacts with the E2 enzymes UBE2D1, UBE2D3, UBE2E1 and UBE2L3. Plays a key role in neural development, probably by mediating ubiquitination of threonine residues on target proteins. Involved in different processes such as regulation of neurite outgrowth, synaptic growth, synaptogenesis and axon degeneration. Required for the formation of major central nervous system axon tracts. Required for proper axon growth by regulating axon navigation and axon branching: acts by regulating the subcellular location and stability of MAP3K12/DLK. Required for proper localization of retinogeniculate projections but not for eye-specific segregation. Regulates axon guidance in the olfactory system. Involved in Wallerian axon degeneration, an evolutionarily conserved process that drives the loss of damaged axons: acts by promoting destabilization of NMNAT2, probably via ubiquitination of NMNAT2. Catalyzes ubiquitination of threonine and/or serine residues on NMNAT2, consequences of threonine and/or serine ubiquitination are however unknown. Regulates the internalization of TRPV1 in peripheral sensory neurons. May mediate ubiquitination and subsequent proteasomal degradation of TSC2/tuberin. Independently of the E3 ubiquitin-protein ligase activity, also acts as a guanosine exchange factor (GEF) for RAN in neurons of dorsal root ganglia. May function as a facilitator or regulator of transcriptional activation by MYC. Acts in concert with HUWE1 to regulate the circadian clock gene expression by promoting the lithium-induced ubiquination and degradation of NR1D1. This is E3 ubiquitin-protein ligase MYCBP2 from Mus musculus (Mouse).